Here is a 230-residue protein sequence, read N- to C-terminus: Cytochrome c oxidase subunit 2 (230 aa).

Topologically, residues 1–14 (MAHPAQLGFQDAAS) are mitochondrial intermembrane. The helical transmembrane segment at 15 to 45 (PVMEELLCFHDHALMIVFLISTLVLYIIIAM) threads the bilayer. Topologically, residues 46–59 (VSTKLTNKFILDSQ) are mitochondrial matrix. A helical membrane pass occupies residues 60-87 (EIEIVWTVLPAIILILIALPSLRILYLM). Over 88 to 230 (DEINDPHVTI…NWSSAMLEDA (143 aa)) the chain is Mitochondrial intermembrane. Cu cation-binding residues include His-161, Cys-196, Glu-198, Cys-200, His-204, and Met-207. Glu-198 contributes to the Mg(2+) binding site.

It belongs to the cytochrome c oxidase subunit 2 family. As to quaternary structure, component of the cytochrome c oxidase (complex IV, CIV), a multisubunit enzyme composed of 14 subunits. The complex is composed of a catalytic core of 3 subunits MT-CO1, MT-CO2 and MT-CO3, encoded in the mitochondrial DNA, and 11 supernumerary subunits COX4I, COX5A, COX5B, COX6A, COX6B, COX6C, COX7A, COX7B, COX7C, COX8 and NDUFA4, which are encoded in the nuclear genome. The complex exists as a monomer or a dimer and forms supercomplexes (SCs) in the inner mitochondrial membrane with NADH-ubiquinone oxidoreductase (complex I, CI) and ubiquinol-cytochrome c oxidoreductase (cytochrome b-c1 complex, complex III, CIII), resulting in different assemblies (supercomplex SCI(1)III(2)IV(1) and megacomplex MCI(2)III(2)IV(2)). Found in a complex with TMEM177, COA6, COX18, COX20, SCO1 and SCO2. Interacts with TMEM177 in a COX20-dependent manner. Interacts with COX20. Interacts with COX16. The cofactor is Cu cation.

It localises to the mitochondrion inner membrane. The enzyme catalyses 4 Fe(II)-[cytochrome c] + O2 + 8 H(+)(in) = 4 Fe(III)-[cytochrome c] + 2 H2O + 4 H(+)(out). Its function is as follows. Component of the cytochrome c oxidase, the last enzyme in the mitochondrial electron transport chain which drives oxidative phosphorylation. The respiratory chain contains 3 multisubunit complexes succinate dehydrogenase (complex II, CII), ubiquinol-cytochrome c oxidoreductase (cytochrome b-c1 complex, complex III, CIII) and cytochrome c oxidase (complex IV, CIV), that cooperate to transfer electrons derived from NADH and succinate to molecular oxygen, creating an electrochemical gradient over the inner membrane that drives transmembrane transport and the ATP synthase. Cytochrome c oxidase is the component of the respiratory chain that catalyzes the reduction of oxygen to water. Electrons originating from reduced cytochrome c in the intermembrane space (IMS) are transferred via the dinuclear copper A center (CU(A)) of subunit 2 and heme A of subunit 1 to the active site in subunit 1, a binuclear center (BNC) formed by heme A3 and copper B (CU(B)). The BNC reduces molecular oxygen to 2 water molecules using 4 electrons from cytochrome c in the IMS and 4 protons from the mitochondrial matrix. This Danio rerio (Zebrafish) protein is Cytochrome c oxidase subunit 2 (mt-co2).